Consider the following 313-residue polypeptide: Homoserine O-succinyltransferase (313 aa).

Catalysis depends on Cys142, which acts as the Acyl-thioester intermediate. Substrate-binding residues include Lys163 and Ser192. His235 serves as the catalytic Proton acceptor. Residue Glu237 is part of the active site. Substrate is bound at residue Arg249.

It belongs to the MetA family.

It localises to the cytoplasm. The enzyme catalyses L-homoserine + succinyl-CoA = O-succinyl-L-homoserine + CoA. It functions in the pathway amino-acid biosynthesis; L-methionine biosynthesis via de novo pathway; O-succinyl-L-homoserine from L-homoserine: step 1/1. In terms of biological role, transfers a succinyl group from succinyl-CoA to L-homoserine, forming succinyl-L-homoserine. This chain is Homoserine O-succinyltransferase, found in Aliivibrio fischeri (strain MJ11) (Vibrio fischeri).